The following is a 119-amino-acid chain: Large ribosomal subunit protein uL22 (119 aa).

The protein belongs to the universal ribosomal protein uL22 family. Part of the 50S ribosomal subunit.

In terms of biological role, this protein binds specifically to 23S rRNA; its binding is stimulated by other ribosomal proteins, e.g. L4, L17, and L20. It is important during the early stages of 50S assembly. It makes multiple contacts with different domains of the 23S rRNA in the assembled 50S subunit and ribosome. The globular domain of the protein is located near the polypeptide exit tunnel on the outside of the subunit, while an extended beta-hairpin is found that lines the wall of the exit tunnel in the center of the 70S ribosome. The protein is Large ribosomal subunit protein uL22 of Trichormus variabilis (strain ATCC 29413 / PCC 7937) (Anabaena variabilis).